The primary structure comprises 219 residues: VQ motif-containing protein 19 (219 aa).

A VQ motif is present at residues 47-56; sequence FKQVVQMLTG. The segment at 52-94 is disordered; that stretch reads QMLTGSSSPRSPDSPRPPTTPSGKGNFVIPPIKTAQPKKHSGN. S59, S65, S127, S131, S139, S141, and S152 each carry phosphoserine. A Phosphothreonine modification is found at T155. Disordered stretches follow at residues 156–177 and 190–219; these read PLKQGTNGNEGDPFDKMSPLSE and HRSPISTPRDSEPQLLPLFPVTSPRLSPEM. A phosphoserine mark is found at S192 and S195. A phosphothreonine mark is found at T196 and T211. A phosphoserine mark is found at S212 and S216.

Phosphorylated on serine and threonine residues by MPK6.

Its subcellular location is the nucleus. Functionally, may modulate WRKY transcription factor activities. The protein is VQ motif-containing protein 19 of Arabidopsis thaliana (Mouse-ear cress).